A 153-amino-acid polypeptide reads, in one-letter code: Prostaglandin E synthase (153 aa).

Residues 1 to 13 (MTSLGLVMENSQV) lie on the Lumenal side of the membrane. A helical transmembrane segment spans residues 14–42 (LPAFLLCSTLLVIKMYAVAVITGQVRLRK). Arg-39 lines the glutathione pocket. The Cytoplasmic segment spans residues 43–61 (KAFANPEDALKRGGLQYCR). A helical membrane pass occupies residues 62–91 (SDPDVERCLRAHRNDMETIYPFLFLGFVYS). Residue 74–78 (RNDME) participates in glutathione binding. The Lumenal segment spans residues 92-98 (FLGPNPL). A helical membrane pass occupies residues 99-120 (IAWIHFLVVLTGRVVHTVAYLG). The glutathione site is built by His-114 and Tyr-118. Residues 121-124 (KMNP) are Cytoplasmic-facing. A helical transmembrane segment spans residues 125–153 (RIRSGAYVLAQFACFSMALQILWEVAHHL). 127–131 (RSGAY) is a binding site for glutathione.

Belongs to the MAPEG family. Glutathione serves as cofactor.

It is found in the membrane. The protein localises to the cytoplasm. Its subcellular location is the perinuclear region. The catalysed reaction is prostaglandin H2 = prostaglandin E2. The enzyme catalyses 2-glyceryl-prostaglandin H2 = 2-glyceryl-prostaglandin E2. It carries out the reaction prostaglandin G2 = (15S)-15-hydroperoxy-prostaglandin E2. It catalyses the reaction 1-chloro-2,4-dinitrobenzene + glutathione = 2,4-dinitrophenyl-S-glutathione + chloride + H(+). The catalysed reaction is (5S)-hydroperoxy-(6E,8Z,11Z,14Z)-eicosatetraenoate + 2 glutathione = (5S)-hydroxy-(6E,8Z,11Z,14Z)-eicosatetraenoate + glutathione disulfide + H2O. It participates in lipid metabolism; prostaglandin biosynthesis. Its activity is regulated as follows. Activity is increased following LPS stimulation and down-regulated by the anti-inflammatory glucocorticoid dexamethasone. In terms of biological role, terminal enzyme of the cyclooxygenase (COX)-2-mediated prostaglandin E2 (PGE2) biosynthetic pathway. Catalyzes the glutathione-dependent oxidoreduction of prostaglandin endoperoxide H2 (PGH2) to prostaglandin E2 (PGE2) in response to inflammatory stimuli. Plays a key role in inflammation response, fever and pain. Also catalyzes the oxidoreduction of endocannabinoids into prostaglandin glycerol esters and PGG2 into 15-hydroperoxy-PGE2. In addition, displays low glutathione transferase and glutathione-dependent peroxidase activities, toward 1-chloro-2,4-dinitrobenzene and 5-hydroperoxyicosatetraenoic acid (5-HPETE), respectively. The protein is Prostaglandin E synthase (Ptges) of Rattus norvegicus (Rat).